The following is a 466-amino-acid chain: Vimentin (466 aa).

Composition is skewed to low complexity over residues 1-13 (MSTRTVSSSSYRR) and 20-31 (TASRPSSSRSYV). Positions 1 to 31 (MSTRTVSSSSYRRMFGGPGTASRPSSSRSYV) are disordered. The residue at position 2 (serine 2) is an N-acetylserine. Residues 2–95 (STRTVSSSSY…FSLADAINTE (94 aa)) form a head region. Residue serine 7 is modified to Phosphoserine; alternate. Serine 7 is a glycosylation site (O-linked (GlcNAc) serine; alternate). Phosphoserine is present on residues serine 8, serine 9, and serine 10. Phosphothreonine is present on threonine 20. 2 positions are modified to phosphoserine: serine 25 and serine 26. An O-linked (GlcNAc) threonine glycan is attached at threonine 33. Serine 34 carries O-linked (GlcNAc) serine; alternate glycosylation. Serine 34 is modified (phosphoserine; by PKC; alternate). Serine 39 carries the post-translational modification Phosphoserine; by CaMK2, PKA, PKC and ROCK2. Phosphoserine occurs at positions 42, 47, 49, and 51. Tyrosine 53 carries the post-translational modification Phosphotyrosine. Serine 55 is subject to Phosphoserine. Position 56 is a phosphoserine; by CDK5 and CDK1 (serine 56). At tyrosine 61 the chain carries Phosphotyrosine. A Phosphoserine modification is found at serine 66. Residue serine 72 is modified to Phosphoserine; by AURKB and ROCK2. 2 positions are modified to phosphoserine: serine 73 and serine 87. The segment at 96-131 (FKNTRTNEKVELQELNDRFANYIDKVRFLEQQNKIL) is coil 1A. Residues 96-131 (FKNTRTNEKVELQELNDRFANYIDKVRFLEQQNKIL) are a coiled coil. In terms of domain architecture, IF rod spans 103–411 (EKVELQELND…KLLEGEESRI (309 aa)). Lysine 104 is covalently cross-linked (Glycyl lysine isopeptide (Lys-Gly) (interchain with G-Cter in SUMO2)). Tyrosine 117 is subject to Phosphotyrosine. An N6-acetyllysine; alternate mark is found at lysine 120, lysine 129, and lysine 139. An N6-succinyllysine; alternate mark is found at lysine 120 and lysine 129. Glycyl lysine isopeptide (Lys-Gly) (interchain with G-Cter in SUMO2); alternate cross-links involve residues lysine 120, lysine 129, and lysine 139. The segment at 132-153 (LAELEQLKGQGKSRLGDLYEEE) is linker 1. A Phosphoserine modification is found at serine 144. Positions 154 to 245 (MRELRRQVDQ…KLHDEEIQEL (92 aa)) form a coiled coil. Residues 154–245 (MRELRRQVDQ…KLHDEEIQEL (92 aa)) are coil 1B. At lysine 168 the chain carries N6-acetyllysine. Lysine 188 carries the N6-acetyllysine; alternate modification. N6-succinyllysine; alternate is present on lysine 188. The residue at position 214 (serine 214) is a Phosphoserine. Position 223 is an N6-acetyllysine; alternate (lysine 223). Lysine 223 participates in a covalent cross-link: Glycyl lysine isopeptide (Lys-Gly) (interchain with G-Cter in SUMO2); alternate. Residue serine 226 is modified to Phosphoserine. N6-acetyllysine is present on lysine 235. The interval 246–268 (QAQIQEQHVQIDMDVSKPDLTAA) is linker 12. Residue lysine 262 forms a Glycyl lysine isopeptide (Lys-Gly) (interchain with G-Cter in SUMO2) linkage. Residues 269–407 (LRDVRQQYES…ATYRKLLEGE (139 aa)) are coil 2. Lysine 294 carries the post-translational modification N6-acetyllysine; alternate. N6-succinyllysine; alternate is present on lysine 294. Lysine 294 is covalently cross-linked (Glycyl lysine isopeptide (Lys-Gly) (interchain with G-Cter in SUMO2); alternate). Serine 299 is subject to Phosphoserine. Positions 303–407 (NRNNDALRQA…ATYRKLLEGE (105 aa)) form a coiled coil. A Glycyl lysine isopeptide (Lys-Gly) (interchain with G-Cter in SUMO2) cross-link involves residue lysine 313. Serine 325 carries the post-translational modification Phosphoserine. The short motif at 326 to 329 (LTCE) is the [IL]-x-C-x-x-[DE] motif element. Lysine 373 is subject to N6-acetyllysine; alternate. A Glycyl lysine isopeptide (Lys-Gly) (interchain with G-Cter in SUMO2); alternate cross-link involves residue lysine 373. Positions 408-466 (ESRISLPLPNFSSLNLRETNLESLPLVDTHSKRTLLIKTVETRDGQVINETSQHHDDLE) are tail. A phosphoserine mark is found at serine 409, serine 412, serine 419, and serine 420. Threonine 426 carries the phosphothreonine modification. The residue at position 430 (serine 430) is a Phosphoserine. Residue threonine 436 is modified to Phosphothreonine. Phosphoserine is present on serine 438. Lysine 439 participates in a covalent cross-link: Glycyl lysine isopeptide (Lys-Gly) (interchain with G-Cter in SUMO2). Residue lysine 445 is modified to N6-acetyllysine; alternate. The residue at position 445 (lysine 445) is an N6-succinyllysine; alternate. Residue lysine 445 forms a Glycyl lysine isopeptide (Lys-Gly) (interchain with G-Cter in SUMO2); alternate linkage. Lysine 445 participates in a covalent cross-link: Glycyl lysine isopeptide (Lys-Gly) (interchain with G-Cter in SUMO1); alternate. A phosphothreonine mark is found at threonine 446 and threonine 458. A Phosphoserine modification is found at serine 459.

Belongs to the intermediate filament family. As to quaternary structure, homomer assembled from elementary dimers. Identified in complexes that contain VIM, EZR, AHNAK, BFSP1, BFSP2, ANK2, PLEC, PRX and spectrin. Interacts with BCAS3. Interacts with LGSN. Interacts with SYNM. Interacts (via rod region) with PLEC (via CH 1 domain). Interacts with STK33. Interacts with LARP6. Interacts with RAB8B. Interacts with TOR1A; the interaction associates TOR1A with the cytoskeleton. Interacts with TOR1AIP1. Interacts with TOR1AIP1. Interacts with DIAPH1. Interacts with EPPK1; interaction is dependent of higher-order structure of intermediate filament. Interacts with the non-receptor tyrosine kinase SRMS; the interaction leads to phosphorylation of VIM. Interacts with NOD2. Interacts (via head region) with CORO1C. Interacts with HDGF. Interacts with PRKCE (via phorbol-ester/DAG-type 2 domain). Interacts with BFSP2. Interacts with PPL. Interacts with PKP1 and PKP2. Interacts with SCRIB (via PDZ domains); the interaction protects SCRIB from proteasomal degradation and facilitates SCRIB localization to intermediate filaments, the interaction is reduced by cell contact inhibition. One of the most prominent phosphoproteins in various cells of mesenchymal origin. Phosphorylation is enhanced during cell division, at which time vimentin filaments are significantly reorganized. Phosphorylation by PKN1 inhibits the formation of filaments. Filament disassembly during mitosis is promoted by phosphorylation at Ser-55 as well as by nestin. Phosphorylated at Ser-56 by CDK5 during neutrophil secretion in the cytoplasm. Phosphorylated by STK33. Phosphorylated on tyrosine residues by SRMS. Post-translationally, S-nitrosylation is induced by interferon-gamma and oxidatively-modified low-densitity lipoprotein (LDL(ox)) possibly implicating the iNOS-S100A8/9 transnitrosylase complex.

It localises to the cytoplasm. Its subcellular location is the cytoskeleton. It is found in the nucleus matrix. The protein resides in the cell membrane. Vimentins are class-III intermediate filaments found in various non-epithelial cells, especially mesenchymal cells. Vimentin is attached to the nucleus, endoplasmic reticulum, and mitochondria, either laterally or terminally. Plays a role in cell directional movement, orientation, cell sheet organization and Golgi complex polarization at the cell migration front. Protects SCRIB from proteasomal degradation and facilitates its localization to intermediate filaments in a cell contact-mediated manner. In terms of biological role, involved with LARP6 in the stabilization of type I collagen mRNAs for CO1A1 and CO1A2. This Sus scrofa (Pig) protein is Vimentin (VIM).